A 426-amino-acid chain; its full sequence is Phosphomethylpyrimidine synthase (426 aa).

Substrate is bound by residues Asn65, Met94, Tyr123, His162, 184–186, 225–228, and Glu264; these read SRG and DGMR. Residue His268 coordinates Zn(2+). Tyr291 provides a ligand contact to substrate. Residue His332 coordinates Zn(2+). [4Fe-4S] cluster is bound by residues Cys408, Cys411, and Cys415.

Belongs to the ThiC family. [4Fe-4S] cluster is required as a cofactor.

It catalyses the reaction 5-amino-1-(5-phospho-beta-D-ribosyl)imidazole + S-adenosyl-L-methionine = 4-amino-2-methyl-5-(phosphooxymethyl)pyrimidine + CO + 5'-deoxyadenosine + formate + L-methionine + 3 H(+). It functions in the pathway cofactor biosynthesis; thiamine diphosphate biosynthesis. Its function is as follows. Catalyzes the synthesis of the hydroxymethylpyrimidine phosphate (HMP-P) moiety of thiamine from aminoimidazole ribotide (AIR) in a radical S-adenosyl-L-methionine (SAM)-dependent reaction. This chain is Phosphomethylpyrimidine synthase, found in Methanococcus maripaludis (strain C6 / ATCC BAA-1332).